The following is a 54-amino-acid chain: uncharacterized protein (54 aa).

Residues leucine 32–isoleucine 52 form a helical membrane-spanning segment.

It localises to the host membrane. This is an uncharacterized protein from Cassava vein mosaic virus (CsVMV).